The following is a 122-amino-acid chain: Lithostathine (122 aa).

A signal peptide spans 1–26; that stretch reads MLPSMSLPSLXWMLLSCLMLLSQVQG. The propeptide occupies 27–37; that stretch reads EDSPADTPSAR. In terms of domain architecture, C-type lectin spans 38 to 122; the sequence is ISCPKGSMAY…LEPNAGGWEW (85 aa). Cys40 and Cys51 form a disulfide bridge.

As to quaternary structure, cleaved to give an A chain and a B chain joined by a disulfide bond. In terms of tissue distribution, in pancreatic acinar cells.

It is found in the secreted. Might act as an inhibitor of spontaneous calcium carbonate precipitation. The polypeptide is Lithostathine (PTP) (Sus scrofa (Pig)).